The following is a 173-amino-acid chain: Enhancer of split mdelta protein (173 aa).

Positions tyrosine 15 to glutamine 72 constitute a bHLH domain. Positions phenylalanine 93 to leucine 126 constitute an Orange domain. Residues valine 147–tryptophan 173 form a disordered region. Over residues aspartate 151–tryptophan 173 the composition is skewed to basic and acidic residues. The short motif at tryptophan 170–tryptophan 173 is the WRPW motif element.

In terms of assembly, transcription repression requires formation of a complex with a corepressor protein (Groucho).

It is found in the nucleus. In terms of biological role, transcriptional repressor of genes that require a bHLH protein for their transcription. May serve as a transcriptional regulator of the Achaete-scute complex (AS-C) genes. Contributes to the neural-epidermal lineage decision during early neurogenesis. As part of the Notch signaling pathway, required to maintain the self-renewal and identity of type II neuroblasts by regulating the expression of the transcriptional repressor erm. The polypeptide is Enhancer of split mdelta protein (Drosophila melanogaster (Fruit fly)).